A 448-amino-acid polypeptide reads, in one-letter code: MQGTKNNIYTVSRLNGEVRQILEGQLGKIWLNGEISNFSSPSSGHWYLTLKDHSSQIRCAMFKGRNQTVSFKPINGQQVLVKGAISVYEPRGDYQLLIESMLPAGDGLLAQQFDALKMKLAAEGLFAADTKRRLPKNIQRIGVITSPTGAAIRDVLHVLARRDPSIEVIIYPTQVQGETAAQSICQAINIANQRLEVDVLLLTRGGGSLEDLWCFNSEALAHTIYNSALPVVSAVGHEVDTTISDYVADIRAPTPSAGAELLSQDSDNKAQKLATALSRLQQSAKHYQLKQERRLSLLEHRLQRQDPKRTLQQFEQRFDEMQLRLESALSNRLHILSRRQQLLASRLEQQSPKHKLAIEGNRLSYLASRLQDALQDKLSQSEQRIKYVAHQLETVSPLATLSRGYSITTDIHNQVVDSTDKLTIGDSLQTRLRHGQVISTVTQIKPLE.

It belongs to the XseA family. Heterooligomer composed of large and small subunits.

The protein localises to the cytoplasm. The enzyme catalyses Exonucleolytic cleavage in either 5'- to 3'- or 3'- to 5'-direction to yield nucleoside 5'-phosphates.. Bidirectionally degrades single-stranded DNA into large acid-insoluble oligonucleotides, which are then degraded further into small acid-soluble oligonucleotides. The chain is Exodeoxyribonuclease 7 large subunit from Shewanella baltica (strain OS223).